We begin with the raw amino-acid sequence, 1093 residues long: Receptor-mediated endocytosis protein 6 (1093 aa).

The 234-residue stretch at Leu-156 to Lys-389 folds into the Ras-GAP domain. 2 disordered regions span residues Asp-547–Gln-610 and Arg-643–Thr-669. Composition is skewed to polar residues over residues Ile-568 to Thr-577 and Asp-584 to Glu-598. The VPS9 domain maps to His-955–Leu-1093.

The protein belongs to the GAPVD1 family. Interacts with GDP-bound rab-5. Interacts with alpha-adaptin.

The protein localises to the membrane. It is found in the cytoplasmic vesicle. Its subcellular location is the clathrin-coated vesicle. Its function is as follows. Acts both as a GTPase-activating protein (GAP) and a guanine nucleotide exchange factor (GEF), and participates in endocytosis. Acts by regulating the activation of rab-5 by exchanging bound GDP for free GTP at clathrin coated pits. This Caenorhabditis elegans protein is Receptor-mediated endocytosis protein 6 (rme-6).